Reading from the N-terminus, the 505-residue chain is Transcription factor APG (505 aa).

Disordered stretches follow at residues 1 to 40 (MLRG…CSAA), 61 to 99 (GAAN…DTAP), 119 to 156 (PAAA…SGGG), 169 to 242 (PLQQ…APTT), 256 to 312 (AQRL…SQDE), 324 to 344 (RRSA…NLSE), and 469 to 505 (PPPP…VKQA). Residues 23–33 (PLRPPPPPPFQ) are compositionally biased toward pro residues. The span at 131 to 144 (CSSSHGAVVPSTSA) shows a compositional bias: polar residues. A compositionally biased stretch (low complexity) spans 174–199 (PSGGETASASASAAATSTVPVESTVV). The span at 200-212 (QAATNRLRSTPLF) shows a compositional bias: polar residues. Over residues 222 to 239 (PPKPSPRAAAPPPPPPLA) the composition is skewed to pro residues. Residues 288–299 (GDRRQLNWRDSH) are compositionally biased toward basic and acidic residues. Polar residues predominate over residues 300 to 310 (NNQSAEWSASQ). A compositionally biased stretch (basic residues) spans 324-334 (RRSAARSSKRS). A compositionally biased stretch (basic and acidic residues) spans 335–344 (RTAEVHNLSE). One can recognise a bHLH domain in the interval 335 to 384 (RTAEVHNLSERRRRDRINEKMRALQELIPNCNKIDKASMLEEAIEYLKTL). Over residues 492-505 (GAADAGNAPAVKQA) the composition is skewed to low complexity.

The protein belongs to the bHLH protein family. In terms of assembly, homodimer and heterodimer with ILI5 or ILI6.

The protein localises to the nucleus. Its function is as follows. Atypical bHLH transcription factor that acts as a negative regulator of grain size. Binds the transcription factor ILI6 and forms a heterodimer of antagonistic bHLH transcription factors that regulates grain length and weight by controlling cell elongation in lemma and palea. May be involved in the control of lamina inclination through brassinosteroid signaling pathway. The polypeptide is Transcription factor APG (APG) (Oryza sativa subsp. japonica (Rice)).